A 481-amino-acid polypeptide reads, in one-letter code: MASATASHTLCGIPATSSSTTNKAIAPSSARFLAKTPLRRLGFAGAAADSLFTNHVATKLRSLKSSSKPIRGVASMAKKSVGDLTAAELKGKKVFVRADLNVPLDDNQNITDDTRIRAAVPTIKHLMANGAKVILSSHLGRPKGVTPKYSLAPLVPRLSELLGIQVVKVEDCIGPEVEKLVASLPEGGVLLLENVRFYKEEEKNEPEFAKKLASLADLYVNDAFGTAHRAHASTEGVTKFLKPSVAGFLLQKELDYLVGAVSNPKRPFAAIVGGSKVSSKIGVIESLLEKCDILLLGGGMIFTFYKAQGLSVGSSLVEEDKLELATSLLEKAKAKGVSLLLPSDVVIADKFAPDANSKIVPASAIPDGWMGLDIGPDSVKTFNDALDTTKTVIWNGPMGVFEFDKFAVGTEAIAKKLADLSGKGVTTIIGGGDSVAAVEKVGVASVMSHISTGGGASLELLEGKVLPGVIALDEADAPVAV.

Residues 1-75 (MASATASHTL…SSKPIRGVAS (75 aa)) constitute a chloroplast transit peptide. The (2R)-3-phosphoglycerate site is built by Ala98, Asp99, Asn101, Arg115, Ser137, His138, Gly140, Arg141, Arg196, His228, and Arg229. Gly274 contacts ADP. Gly274 lines the CDP pocket. The AMP site is built by Lys276 and Lys280. Lys280 provides a ligand contact to ATP. Gly298 is a binding site for ADP. A CDP-binding site is contributed by Gly298. AMP-binding residues include Gly299 and Gly371. Gly299 and Gly371 together coordinate ATP. Gly396 and Phe401 together coordinate CDP. ADP is bound at residue Phe401. An AMP-binding site is contributed by Glu402. The ATP site is built by Glu402, Asp433, and Ser434. Asp433 lines the Mg(2+) pocket.

The protein belongs to the phosphoglycerate kinase family. As to quaternary structure, monomer. Mg(2+) serves as cofactor.

The protein localises to the plastid. The protein resides in the chloroplast. It carries out the reaction (2R)-3-phosphoglycerate + ATP = (2R)-3-phospho-glyceroyl phosphate + ADP. The protein operates within carbohydrate biosynthesis; Calvin cycle. The polypeptide is Phosphoglycerate kinase, chloroplastic (Nicotiana tabacum (Common tobacco)).